The sequence spans 596 residues: Transketolase-like protein 1 (596 aa).

His46 provides a ligand contact to substrate. Thiamine diphosphate contacts are provided by residues Ser49 and 94–96; that span reads GWL. Asp126 contributes to the Mg(2+) binding site. Thiamine diphosphate-binding residues include Val127 and Asn156. Mg(2+)-binding residues include Asn156 and Leu158. Thiamine diphosphate contacts are provided by Lys218 and His232. Substrate contacts are provided by His232, Arg292, and Ser319. Thiamine diphosphate is bound by residues Glu340 and Phe366. Catalysis depends on Glu340, which acts as the Proton donor. Residues His390 and Asp398 each coordinate substrate. Gln402 serves as a coordination point for thiamine diphosphate. Arg448 is a substrate binding site.

Belongs to the transketolase family. As to quaternary structure, homodimer. Mg(2+) is required as a cofactor. It depends on Ca(2+) as a cofactor. The cofactor is Mn(2+). Co(2+) serves as cofactor. Requires thiamine diphosphate as cofactor.

It localises to the cytoplasm. It catalyses the reaction D-sedoheptulose 7-phosphate + D-glyceraldehyde 3-phosphate = aldehydo-D-ribose 5-phosphate + D-xylulose 5-phosphate. Its function is as follows. Catalyzes the transfer of a two-carbon ketol group from a ketose donor to an aldose acceptor, via a covalent intermediate with the cofactor thiamine pyrophosphate. This is Transketolase-like protein 1 (TKTL1) from Bos taurus (Bovine).